The chain runs to 206 residues: Protein MIS12 homolog (206 aa).

A coiled-coil region spans residues 102-206 (DKCQETNPFS…EKESRRLETQ (105 aa)).

It belongs to the mis12 family. Component of the MIS12 complex composed of MIS12, DSN1, NSL1 and PMF1. Also interacts with KNL1, CBX3, CBX5, NDC80 and ZWINT.

The protein resides in the chromosome. It localises to the centromere. It is found in the kinetochore. Functionally, part of the MIS12 complex which is required for normal chromosome alignment and segregation and for kinetochore formation during mitosis. Essential for proper kinetochore microtubule attachments. This chain is Protein MIS12 homolog, found in Mus musculus (Mouse).